Consider the following 160-residue polypeptide: Ribosomal RNA large subunit methyltransferase H (160 aa).

S-adenosyl-L-methionine is bound by residues Leu76, Gly108, and 127 to 132 (FGRMTF).

It belongs to the RNA methyltransferase RlmH family. As to quaternary structure, homodimer.

Its subcellular location is the cytoplasm. The enzyme catalyses pseudouridine(1915) in 23S rRNA + S-adenosyl-L-methionine = N(3)-methylpseudouridine(1915) in 23S rRNA + S-adenosyl-L-homocysteine + H(+). Functionally, specifically methylates the pseudouridine at position 1915 (m3Psi1915) in 23S rRNA. This Methylocella silvestris (strain DSM 15510 / CIP 108128 / LMG 27833 / NCIMB 13906 / BL2) protein is Ribosomal RNA large subunit methyltransferase H.